A 172-amino-acid chain; its full sequence is Signal peptidase complex catalytic subunit sec11 (172 aa).

Topologically, residues Met1–Gln14 are cytoplasmic. Residues Leu15 to Ile35 form a helical; Signal-anchor for type II membrane protein membrane-spanning segment. Residues Thr36–Glu172 lie on the Lumenal side of the membrane. Active-site charge relay system residues include Ser49 and His90. N-linked (GlcNAc...) asparagine glycosylation occurs at Asn111. The Charge relay system role is filled by Asp115. The interval Val158 to Leu169 is C-terminal short (CTS) helix.

Belongs to the peptidase S26B family. Component of the signal peptidase complex (SPC) composed of a catalytic subunit SEC11 and three accessory subunits SPC1, SPC2 and SPC3. The complex induces a local thinning of the ER membrane which is used to measure the length of the signal peptide (SP) h-region of protein substrates. This ensures the selectivity of the complex towards h-regions shorter than 18-20 amino acids. SPC associates with the translocon complex.

It localises to the endoplasmic reticulum membrane. It catalyses the reaction Cleavage of hydrophobic, N-terminal signal or leader sequences from secreted and periplasmic proteins.. Catalytic component of the signal peptidase complex (SPC) which catalyzes the cleavage of N-terminal signal sequences from nascent proteins as they are translocated into the lumen of the endoplasmic reticulum. Specifically cleaves N-terminal signal peptides that contain a hydrophobic alpha-helix (h-region) shorter than 18-20 amino acids. The polypeptide is Signal peptidase complex catalytic subunit sec11 (sec11) (Neurospora crassa (strain ATCC 24698 / 74-OR23-1A / CBS 708.71 / DSM 1257 / FGSC 987)).